A 210-amino-acid chain; its full sequence is MTKQKPVVIGVAGGSGSGKTSVTRSICQRFTETSILVIEQDYYYKDQSHLPFEERLNTNYDHPLAFDNDLLIEHLQQLMHNEPIEKPVYDYKIHTRSKDVIHVEPKEVIIVEGILILEDPRLVDLMDIKVYVDTDADLRIIRRLMRDIKERGRTLDSVIDQYIQNVRPSHLQFIEPTKRYADIIIPEGGQNHVAIDIMASKIEKILSRGL.

13–20 lines the ATP pocket; that stretch reads GGSGSGKT.

Belongs to the uridine kinase family.

It is found in the cytoplasm. It catalyses the reaction uridine + ATP = UMP + ADP + H(+). It carries out the reaction cytidine + ATP = CMP + ADP + H(+). The protein operates within pyrimidine metabolism; CTP biosynthesis via salvage pathway; CTP from cytidine: step 1/3. It functions in the pathway pyrimidine metabolism; UMP biosynthesis via salvage pathway; UMP from uridine: step 1/1. This Oceanobacillus iheyensis (strain DSM 14371 / CIP 107618 / JCM 11309 / KCTC 3954 / HTE831) protein is Uridine kinase.